Reading from the N-terminus, the 483-residue chain is UDP-N-acetylmuramoyl-L-alanyl-D-glutamate--2,6-diaminopimelate ligase (483 aa).

Ser30 is a binding site for UDP-N-acetyl-alpha-D-muramoyl-L-alanyl-D-glutamate. An ATP-binding site is contributed by 109–115 (GTNGKTT). Residues 151 to 152 (TT), Ser178, and Arg186 contribute to the UDP-N-acetyl-alpha-D-muramoyl-L-alanyl-D-glutamate site. Lys218 is modified (N6-carboxylysine). Residues Arg380, 403-406 (DNPR), Gly453, and Glu457 each bind meso-2,6-diaminopimelate. Positions 403 to 406 (DNPR) match the Meso-diaminopimelate recognition motif motif.

The protein belongs to the MurCDEF family. MurE subfamily. The cofactor is Mg(2+). Post-translationally, carboxylation is probably crucial for Mg(2+) binding and, consequently, for the gamma-phosphate positioning of ATP.

The protein resides in the cytoplasm. It carries out the reaction UDP-N-acetyl-alpha-D-muramoyl-L-alanyl-D-glutamate + meso-2,6-diaminopimelate + ATP = UDP-N-acetyl-alpha-D-muramoyl-L-alanyl-gamma-D-glutamyl-meso-2,6-diaminopimelate + ADP + phosphate + H(+). It functions in the pathway cell wall biogenesis; peptidoglycan biosynthesis. Functionally, catalyzes the addition of meso-diaminopimelic acid to the nucleotide precursor UDP-N-acetylmuramoyl-L-alanyl-D-glutamate (UMAG) in the biosynthesis of bacterial cell-wall peptidoglycan. The polypeptide is UDP-N-acetylmuramoyl-L-alanyl-D-glutamate--2,6-diaminopimelate ligase (Chlamydia pneumoniae (Chlamydophila pneumoniae)).